The chain runs to 246 residues: tRNA (guanine-N(1)-)-methyltransferase (246 aa).

Residues Gly114 and 134–139 (IGDYIL) each bind S-adenosyl-L-methionine.

This sequence belongs to the RNA methyltransferase TrmD family. In terms of assembly, homodimer.

It is found in the cytoplasm. It catalyses the reaction guanosine(37) in tRNA + S-adenosyl-L-methionine = N(1)-methylguanosine(37) in tRNA + S-adenosyl-L-homocysteine + H(+). Its function is as follows. Specifically methylates guanosine-37 in various tRNAs. This Coxiella burnetii (strain RSA 493 / Nine Mile phase I) protein is tRNA (guanine-N(1)-)-methyltransferase.